A 219-amino-acid polypeptide reads, in one-letter code: Uracil-DNA glycosylase (219 aa).

Aspartate 61 (proton acceptor) is an active-site residue.

This sequence belongs to the uracil-DNA glycosylase (UDG) superfamily. UNG family.

It localises to the cytoplasm. It carries out the reaction Hydrolyzes single-stranded DNA or mismatched double-stranded DNA and polynucleotides, releasing free uracil.. Functionally, excises uracil residues from the DNA which can arise as a result of misincorporation of dUMP residues by DNA polymerase or due to deamination of cytosine. This Neisseria meningitidis serogroup B (strain ATCC BAA-335 / MC58) protein is Uracil-DNA glycosylase.